The chain runs to 660 residues: tRNA 5-methylaminomethyl-2-thiouridine biosynthesis bifunctional protein MnmC (660 aa).

Residues 1-242 (MTDRIVPATL…KRAMLVGEFA (242 aa)) form a tRNA (mnm(5)s(2)U34)-methyltransferase region. The tract at residues 266-660 (IGAGLAGCAV…VRALRHGRVA (395 aa)) is FAD-dependent cmnm(5)s(2)U34 oxidoreductase.

It in the N-terminal section; belongs to the methyltransferase superfamily. tRNA (mnm(5)s(2)U34)-methyltransferase family. This sequence in the C-terminal section; belongs to the DAO family. Requires FAD as cofactor.

Its subcellular location is the cytoplasm. The catalysed reaction is 5-aminomethyl-2-thiouridine(34) in tRNA + S-adenosyl-L-methionine = 5-methylaminomethyl-2-thiouridine(34) in tRNA + S-adenosyl-L-homocysteine + H(+). Catalyzes the last two steps in the biosynthesis of 5-methylaminomethyl-2-thiouridine (mnm(5)s(2)U) at the wobble position (U34) in tRNA. Catalyzes the FAD-dependent demodification of cmnm(5)s(2)U34 to nm(5)s(2)U34, followed by the transfer of a methyl group from S-adenosyl-L-methionine to nm(5)s(2)U34, to form mnm(5)s(2)U34. This is tRNA 5-methylaminomethyl-2-thiouridine biosynthesis bifunctional protein MnmC from Burkholderia pseudomallei (strain 1710b).